A 360-amino-acid chain; its full sequence is UDP-N-acetylglucosamine--N-acetylmuramyl-(pentapeptide) pyrophosphoryl-undecaprenol N-acetylglucosamine transferase (360 aa).

UDP-N-acetyl-alpha-D-glucosamine-binding positions include 17–19 (TAG), asparagine 130, arginine 166, serine 200, isoleucine 247, and glutamine 291.

It belongs to the glycosyltransferase 28 family. MurG subfamily.

It is found in the cell membrane. It carries out the reaction di-trans,octa-cis-undecaprenyl diphospho-N-acetyl-alpha-D-muramoyl-L-alanyl-D-glutamyl-meso-2,6-diaminopimeloyl-D-alanyl-D-alanine + UDP-N-acetyl-alpha-D-glucosamine = di-trans,octa-cis-undecaprenyl diphospho-[N-acetyl-alpha-D-glucosaminyl-(1-&gt;4)]-N-acetyl-alpha-D-muramoyl-L-alanyl-D-glutamyl-meso-2,6-diaminopimeloyl-D-alanyl-D-alanine + UDP + H(+). It functions in the pathway cell wall biogenesis; peptidoglycan biosynthesis. Its function is as follows. Cell wall formation. Catalyzes the transfer of a GlcNAc subunit on undecaprenyl-pyrophosphoryl-MurNAc-pentapeptide (lipid intermediate I) to form undecaprenyl-pyrophosphoryl-MurNAc-(pentapeptide)GlcNAc (lipid intermediate II). The polypeptide is UDP-N-acetylglucosamine--N-acetylmuramyl-(pentapeptide) pyrophosphoryl-undecaprenol N-acetylglucosamine transferase (Corynebacterium efficiens (strain DSM 44549 / YS-314 / AJ 12310 / JCM 11189 / NBRC 100395)).